The sequence spans 593 residues: A-type ATP synthase subunit A (593 aa).

Residue 236–243 coordinates ATP; the sequence is GPFGSGKT.

The protein belongs to the ATPase alpha/beta chains family. As to quaternary structure, has multiple subunits with at least A(3), B(3), C, D, E, F, H, I and proteolipid K(x).

It localises to the cell membrane. It catalyses the reaction ATP + H2O + 4 H(+)(in) = ADP + phosphate + 5 H(+)(out). Functionally, component of the A-type ATP synthase that produces ATP from ADP in the presence of a proton gradient across the membrane. The A chain is the catalytic subunit. The polypeptide is A-type ATP synthase subunit A (Pyrobaculum arsenaticum (strain DSM 13514 / JCM 11321 / PZ6)).